The sequence spans 172 residues: Caltractin (172 aa).

A disordered region spans residues 1-23 (MQKYGSKKIGATSATSSNKQKVQ). The span at 12 to 21 (TSATSSNKQK) shows a compositional bias: polar residues. 4 EF-hand domains span residues 29–64 (EQRQEIKEAFDLFDMDGSGKIDAKELKVAMRALGFE), 65–99 (PKKEEIKKMISGIDNGSGKIDFNDFLQLMTAKMSE), 101–136 (DSHAEIMKAFRLFDEDDSGFITFANLKRVAKDLGEN), and 137–172 (MTDEELREMIEEADRSNQGQISKEDFLRIMKKTNLF). The Ca(2+) site is built by Asp42, Asp44, Ser46, Lys48, and Glu53.

It belongs to the centrin family. In terms of assembly, monomer.

It localises to the cytoplasm. Its subcellular location is the cytoskeleton. It is found in the microtubule organizing center. The protein localises to the centrosome. Functionally, plays a fundamental role in microtubule-organizing center structure and function. The sequence is that of Caltractin (CTN) from Naegleria gruberi (Amoeba).